The sequence spans 247 residues: 1-(5-phosphoribosyl)-5-[(5-phosphoribosylamino)methylideneamino] imidazole-4-carboxamide isomerase 1 (247 aa).

The active-site Proton acceptor is glutamate 8. Aspartate 128 serves as the catalytic Proton donor.

This sequence belongs to the HisA/HisF family.

The protein resides in the cytoplasm. It carries out the reaction 1-(5-phospho-beta-D-ribosyl)-5-[(5-phospho-beta-D-ribosylamino)methylideneamino]imidazole-4-carboxamide = 5-[(5-phospho-1-deoxy-D-ribulos-1-ylimino)methylamino]-1-(5-phospho-beta-D-ribosyl)imidazole-4-carboxamide. It participates in amino-acid biosynthesis; L-histidine biosynthesis; L-histidine from 5-phospho-alpha-D-ribose 1-diphosphate: step 4/9. In Ruegeria sp. (strain TM1040) (Silicibacter sp.), this protein is 1-(5-phosphoribosyl)-5-[(5-phosphoribosylamino)methylideneamino] imidazole-4-carboxamide isomerase 1.